The sequence spans 84 residues: Large ribosomal subunit protein bL27 (84 aa).

A disordered region spans residues 1-20; the sequence is MAHKKGGGSTKNGRDSNPKY.

It belongs to the bacterial ribosomal protein bL27 family.

The protein is Large ribosomal subunit protein bL27 of Chlorobaculum tepidum (strain ATCC 49652 / DSM 12025 / NBRC 103806 / TLS) (Chlorobium tepidum).